A 408-amino-acid polypeptide reads, in one-letter code: Peptidase T (408 aa).

His78 contributes to the Zn(2+) binding site. Asp80 is a catalytic residue. A Zn(2+)-binding site is contributed by Asp141. Glu175 (proton acceptor) is an active-site residue. Residues Glu176, Asp198, and His380 each coordinate Zn(2+).

Belongs to the peptidase M20B family. The cofactor is Zn(2+).

The protein resides in the cytoplasm. It catalyses the reaction Release of the N-terminal residue from a tripeptide.. Functionally, cleaves the N-terminal amino acid of tripeptides. The sequence is that of Peptidase T from Clostridium botulinum (strain Langeland / NCTC 10281 / Type F).